The sequence spans 186 residues: Probable nicotinate-nucleotide adenylyltransferase (186 aa).

It belongs to the NadD family.

The catalysed reaction is nicotinate beta-D-ribonucleotide + ATP + H(+) = deamido-NAD(+) + diphosphate. It functions in the pathway cofactor biosynthesis; NAD(+) biosynthesis; deamido-NAD(+) from nicotinate D-ribonucleotide: step 1/1. In terms of biological role, catalyzes the reversible adenylation of nicotinate mononucleotide (NaMN) to nicotinic acid adenine dinucleotide (NaAD). The chain is Probable nicotinate-nucleotide adenylyltransferase from Thermus thermophilus (strain ATCC BAA-163 / DSM 7039 / HB27).